The primary structure comprises 297 residues: MAADIINGMEIRESILEELRGEVANLKRDYNVVPGLVTILVGNHPASLSYVTLKIKTAIELGFHEIQDNQSETITEEELIGIIKKYNEDPLIHGILVQLPLPSHINEGKVLHAIDPNKDVDGFHPMNLGRLVIGGNAITFLPCTPAGIQELLIRSSVETLGAEVVVIGRSNIVGRPISIMLTQKGVGGDATVTLVHTKSKNIVRHCQQADIVIAAVGVPNFVKAEWIKPGATVIDVGVNRIGFNEDTGKPILSGDVDFVNVSQVAGKITPVPGGVGPMTIAMLMRNTVRSAFFHLSL.

NADP(+) contacts are provided by residues 168–170, Thr197, and Val238; that span reads GRS.

This sequence belongs to the tetrahydrofolate dehydrogenase/cyclohydrolase family. Homodimer.

The catalysed reaction is (6R)-5,10-methylene-5,6,7,8-tetrahydrofolate + NADP(+) = (6R)-5,10-methenyltetrahydrofolate + NADPH. It catalyses the reaction (6R)-5,10-methenyltetrahydrofolate + H2O = (6R)-10-formyltetrahydrofolate + H(+). The protein operates within one-carbon metabolism; tetrahydrofolate interconversion. Its function is as follows. Catalyzes the oxidation of 5,10-methylenetetrahydrofolate to 5,10-methenyltetrahydrofolate and then the hydrolysis of 5,10-methenyltetrahydrofolate to 10-formyltetrahydrofolate. The sequence is that of Bifunctional protein FolD from Lawsonia intracellularis (strain PHE/MN1-00).